The following is a 215-amino-acid chain: Pyrrolidone-carboxylate peptidase 1 (215 aa).

Catalysis depends on residues E80, C143, and H167.

It belongs to the peptidase C15 family. In terms of assembly, homotetramer.

The protein resides in the cytoplasm. It carries out the reaction Release of an N-terminal pyroglutamyl group from a polypeptide, the second amino acid generally not being Pro.. In terms of biological role, removes 5-oxoproline from various penultimate amino acid residues except L-proline. In Ralstonia nicotianae (strain ATCC BAA-1114 / GMI1000) (Ralstonia solanacearum), this protein is Pyrrolidone-carboxylate peptidase 1.